Reading from the N-terminus, the 456-residue chain is Chitin synthase regulatory factor 1 (456 aa).

Disordered stretches follow at residues 1 to 20 (MPASTSIPETPSKLPDALLV), 38 to 74 (ESPLALEGSPLPTVSDVLPETNNAHEEVSSSSWSLSS), and 139 to 158 (SKPSLSSNSSDSSFSKSGSE). Residues 140–158 (KPSLSSNSSDSSFSKSGSE) show a composition bias toward low complexity. Residues Ser-227 and Ser-230 each carry the phosphoserine modification. 4 Sel1-like repeats span residues 293–327 (NFVPYELAELYKQRGTSQDLKSILPLYMLAASLGH), 328–364 (DRSSFLVGEAFFYGTYGARENKLRALQYYHLANDKGN), 365–402 (ADAMLALCKLYLRGLPGHIFPSSRRAFEYAHRAAMLGH), and 403–438 (APACYVLGKFYETGVGCVKDLAKSEAGFRAGLINDS).

In terms of biological role, involved in chitin biosynthesis. The polypeptide is Chitin synthase regulatory factor 1 (chr1) (Schizosaccharomyces pombe (strain 972 / ATCC 24843) (Fission yeast)).